A 488-amino-acid chain; its full sequence is Probable Xaa-Pro aminopeptidase ATEG_00858 (488 aa).

Residues Asp273, Asp284, Glu417, and Glu456 each contribute to the Mn(2+) site.

The protein belongs to the peptidase M24B family. Mn(2+) serves as cofactor.

It catalyses the reaction Release of any N-terminal amino acid, including proline, that is linked to proline, even from a dipeptide or tripeptide.. Functionally, catalyzes the removal of a penultimate prolyl residue from the N-termini of peptides. This is Probable Xaa-Pro aminopeptidase ATEG_00858 from Aspergillus terreus (strain NIH 2624 / FGSC A1156).